A 1176-amino-acid polypeptide reads, in one-letter code: Carbamoyl phosphate synthase arginine-specific large chain (1176 aa).

The N-terminal 11 residues, 1–11, are a transit peptide targeting the mitochondrion; that stretch reads MLRSISIASRA. Residues 70-465 are carboxyphosphate synthetic domain; the sequence is SRSPDVKKVL…SLQKAIRQVD (396 aa). 12 residues coordinate ATP: Arg-197, Arg-237, Gly-243, Gly-244, Lys-273, Leu-275, Glu-280, Gly-306, Thr-307, His-308, Gln-348, and Glu-362. The ATP-grasp 1 domain occupies 201–391; sequence VQALNEIDIP…LAYTAAKIAL (191 aa). Mg(2+)-binding residues include Gln-348, Glu-362, and Asn-364. Residues Gln-348, Glu-362, and Asn-364 each contribute to the Mn(2+) site. The oligomerization domain stretch occupies residues 466-610; sequence PNFAGFEAYW…YTSYNATTHD (145 aa). The segment at 611–997 is carbamoyl phosphate synthetic domain; it reads VKFDNGTMVL…AYWAALLSVN (387 aa). An ATP-grasp 2 domain is found at 734–931; it reads SSILDSIGVD…FIDTASAAIM (198 aa). ATP-binding residues include Arg-770, Gln-809, Ile-811, Glu-816, Gly-841, Val-842, His-843, Ser-844, Gln-884, and Glu-902. Positions 884, 902, and 904 each coordinate Mg(2+). Gln-884, Glu-902, and Asn-904 together coordinate Mn(2+). The allosteric domain stretch occupies residues 998–1137; that stretch reads GMKLPKANSG…NPIPYSEGFK (140 aa). The MGS-like domain maps to 999–1154; it reads MKLPKANSGI…RDFVGEAATT (156 aa).

Belongs to the CarB family. In terms of assembly, heterodimer composed of 2 chains; the small (or glutamine) chain promotes the hydrolysis of glutamine to ammonia, which is used by the large (or ammonia) chain to synthesize carbamoyl phosphate. It depends on Mg(2+) as a cofactor. Mn(2+) serves as cofactor.

The protein localises to the mitochondrion. It carries out the reaction hydrogencarbonate + L-glutamine + 2 ATP + H2O = carbamoyl phosphate + L-glutamate + 2 ADP + phosphate + 2 H(+). It catalyses the reaction hydrogencarbonate + NH4(+) + 2 ATP = carbamoyl phosphate + 2 ADP + phosphate + 2 H(+). It participates in amino-acid biosynthesis; L-arginine biosynthesis; carbamoyl phosphate from bicarbonate: step 1/1. Its function is as follows. Large subunit of the arginine-specific carbamoyl phosphate synthase (CPSase). CPSase catalyzes the formation of carbamoyl phosphate from the ammonia moiety of glutamine, hydrogencarbonate, and phosphate donated by ATP, constituting the first step of 2 biosynthetic pathways, one leading to arginine and/or urea and the other to pyrimidine nucleotides. The large subunit (synthetase) binds the substrates ammonia (free or transferred from glutamine from the small subunit), hydrogencarbonate and ATP and carries out an ATP-coupled ligase reaction, activating hydrogencarbonate by forming carboxy phosphate which reacts with ammonia to form carbamoyl phosphate. The protein is Carbamoyl phosphate synthase arginine-specific large chain (argA) of Cutaneotrichosporon cutaneum (Yeast).